A 718-amino-acid polypeptide reads, in one-letter code: Ribonuclease J (718 aa).

The disordered stretch occupies residues 1-130 (MNDSRNRGRK…RGNRGGGRRN (130 aa)). Composition is skewed to low complexity over residues 55-91 (AAQG…NNNR) and 100-118 (SGNA…NRQG). The Zn(2+) site is built by histidine 220, histidine 222, aspartate 224, histidine 225, histidine 287, and aspartate 309. Position 510–514 (510–514 (HTSGH)) interacts with substrate. Residue histidine 536 coordinates Zn(2+).

It belongs to the metallo-beta-lactamase superfamily. RNA-metabolizing metallo-beta-lactamase-like family. Bacterial RNase J subfamily. As to quaternary structure, homodimer, may be a subunit of the RNA degradosome. It depends on Zn(2+) as a cofactor.

The protein localises to the cytoplasm. Functionally, an RNase that has 5'-3' exonuclease and possibly endoonuclease activity. Involved in maturation of rRNA and in some organisms also mRNA maturation and/or decay. In Corynebacterium glutamicum (strain ATCC 13032 / DSM 20300 / JCM 1318 / BCRC 11384 / CCUG 27702 / LMG 3730 / NBRC 12168 / NCIMB 10025 / NRRL B-2784 / 534), this protein is Ribonuclease J.